The following is a 361-amino-acid chain: Polyribonucleotide 5'-hydroxyl-kinase MJ1315 (361 aa).

An ATP-binding site is contributed by 39 to 46 (GGVDSGKT).

A divalent metal cation is required as a cofactor.

The enzyme catalyses a 5'-end dephospho-2'-deoxyribonucleoside-DNA + ATP = a 5'-end 5'-phospho-2'-deoxyribonucleoside-DNA + ADP + H(+). The catalysed reaction is a 5'-end dephospho-ribonucleoside-RNA + ATP = a 5'-end 5'-phospho-ribonucleoside-RNA + ADP + H(+). Functionally, polynucleotide kinase that can phosphorylate the 5'-hydroxyl groups of both single-stranded RNA (ssRNA) and single-stranded DNA (ssDNA). Exhibits a strong preference for ssRNA. The protein is Polyribonucleotide 5'-hydroxyl-kinase MJ1315 of Methanocaldococcus jannaschii (strain ATCC 43067 / DSM 2661 / JAL-1 / JCM 10045 / NBRC 100440) (Methanococcus jannaschii).